Consider the following 734-residue polypeptide: Sulfate transporter (734 aa).

A compositionally biased stretch (polar residues) spans 1–11 (MSLKNGEQNDL). A disordered region spans residues 1–38 (MSLKNGEQNDLSPKDSVKGNDQYRSPSGIHVEHEEESR). 2 positions are modified to phosphoserine: Ser12 and Ser16. Transmembrane regions (helical) follow at residues 113–133 (MMSG…YSLL) and 138–158 (PIYG…LGTS). Residues Asn194 and Asn204 are each glycosylated (N-linked (GlcNAc...) asparagine). Transmembrane regions (helical) follow at residues 222–242 (FVAG…VSVY), 247–267 (LLGG…VKYL), 269–289 (GLSL…IHIF), 292–312 (IHKT…VLLP), 379–399 (VDAI…SEMF), 415–435 (AIGF…SAAL), 453–473 (VMTA…FFSL), and 519–539 (LIST…CVIL). One can recognise an STAS domain in the interval 563-714 (AYKNLQAKSG…YSVYEAMTFA (152 aa)).

The protein belongs to the SLC26A/SulP transporter (TC 2.A.53) family. In terms of processing, N-glycosylated.

It localises to the cell membrane. The protein resides in the apical cell membrane. The catalysed reaction is oxalate(in) + sulfate(out) = oxalate(out) + sulfate(in). It catalyses the reaction sulfate(out) + 2 chloride(in) = sulfate(in) + 2 chloride(out). It carries out the reaction oxalate(out) + 2 chloride(in) = oxalate(in) + 2 chloride(out). The enzyme catalyses bromide(in) + chloride(out) = bromide(out) + chloride(in). The catalysed reaction is nitrate(in) + chloride(out) = nitrate(out) + chloride(in). It catalyses the reaction iodide(in) + chloride(out) = iodide(out) + chloride(in). Functionally, sulfate transporter which mediates sulfate uptake into chondrocytes in order to maintain adequate sulfation of proteoglycans which is needed for cartilage development. Mediates electroneutral anion exchange of sulfate ions for oxalate ions, sulfate and oxalate ions for chloride and/or hydroxyl ions and chloride ions for bromide, iodide and nitrate ions. The coupling of sulfate transport to both hydroxyl and chloride ions likely serves to ensure transport at both acidic pH when most sulfate uptake is mediated by sulfate-hydroxide exchange and alkaline pH when most sulfate uptake is mediated by sulfate-chloride exchange. Essential for chondrocyte proliferation, differentiation and cell size expansion. The chain is Sulfate transporter (SLC26A2) from Ovis aries (Sheep).